A 77-amino-acid polypeptide reads, in one-letter code: Liver-expressed antimicrobial peptide 2 (77 aa).

The signal sequence occupies residues 1 to 22; it reads MWHLKLCAVLMIFLLLLGQTDG. A propeptide spanning residues 23–37 is cleaved from the precursor; sequence SPIPEVSSAKRRPRR. Disulfide bonds link C54–C65 and C60–C70.

It belongs to the LEAP2 family.

The protein localises to the secreted. Its function is as follows. Has an antimicrobial activity. The chain is Liver-expressed antimicrobial peptide 2 (LEAP2) from Macaca mulatta (Rhesus macaque).